The chain runs to 653 residues: Serine/threonine-protein phosphatase with EF-hands 1 (653 aa).

One can recognise an IQ domain in the interval S16–F45. The interval I121–K455 is catalytic. Residues D172, H174, D201, and N233 each contribute to the Mn(2+) site. H234 functions as the Proton donor in the catalytic mechanism. Positions 285 and 403 each coordinate Mn(2+). EF-hand domains lie at S483 to L518, R566 to H601, and I606 to Y641. Residues D579, D581, S583, E590, D619, N621, D623, S625, and E630 each contribute to the Ca(2+) site.

This sequence belongs to the PPP phosphatase family. Requires Mn(2+) as cofactor. The cofactor is Mg(2+). In terms of tissue distribution, detected in retina and retinal derived Y-79 retinoblastoma cells. Also found in fetal brain.

The catalysed reaction is O-phospho-L-seryl-[protein] + H2O = L-seryl-[protein] + phosphate. It carries out the reaction O-phospho-L-threonyl-[protein] + H2O = L-threonyl-[protein] + phosphate. Its activity is regulated as follows. Activated by calcium. Functionally, may have a role in the recovery or adaptation response of photoreceptors. May have a role in development. This chain is Serine/threonine-protein phosphatase with EF-hands 1 (PPEF1), found in Homo sapiens (Human).